A 1089-amino-acid chain; its full sequence is MAEAELHKERLQAIAEKRKRQTEIEGKRRQLDEQVLLLQHSKSKVLREKWLLQGVPAGTAEEEEARRRQSEEDEFKVKQLEDNIQRLEQEIQALESEESQISAKEQIILEKLKETEKSFKDLQKSFSTADGASGWSTVLLQGDELTADPIGTNADMAIQKPPQLSEDANQLRSKQDNCGDSRLEPAASSLSPDHKNMEIGVSVAECKSVPGVTSTPHSKDHSSPFYSPSHNGLLADHHESLDNDVAREIQYLDEVLEANCCDSSVDGTYNGISSPEPGAAILVSSLGSPAHSVTEAEPTEKASGRQVPPHIELSRSPSDRMAEGERANGHSTDQPQDLLGNSLQAPASPSSSTSSHCSSRDGEFTLTTLKKEAKFELRAFHEDKKPSKLFEEDEREKEQFCVRKVRPSEEMIELEKERRELIRSQAVKKNPGIAAKWWNPPQEKTIEEQLDEEHLESHRKYKERKEKRAQQEQLQLQQQQQQQLQQQQLQQQQLQQQQLQQQLQQQQLSTSQPCTAPAAHKHLDGIEHTKEDVVTEQIDFSAARKQFQLMENSRQTLAKGQSTPRLFSIKPYYKPLGSIHSDKPPTILRPATVGGTLEDGGTQAAKEQKAPCVSESQSAGAGPANAATQGKEGPYSEPSKRGPLSKLWAEDGEFTSARAVLTVVKDEDHGILDQFSRSVNVSLTQEELDSGLDELSVRSQDTTVLETLSNDFSMDNISDSGASNETPSALQENSLADFSLPQTPQTDNPSEGREGVSKSFSDHGFYSPSSTLGDSPSVDDPLEYQAGLLVQNAIQQAIAEQVDKAEAHTSKEGSEQQEPEATVEEAGSQTPGSEKPQGMFAPPQVSSPVQEKRDILPKNLPAEDRALREKGPSQPPTAAQPSGPVNMEETRPEGGYFSKYSEAAELRSTASLLATQESDVMVGPFKLRSRKQRTLSMIEEEIRAAQEREEELKRQRQVRQSTPSPRAKNAPSLPSRTTCYKTAPGKIEKVKPPPSPTTEGPSLQPDLAPEEAAGTQRPKNLMQTLMEDYETHKSKRRERMDDSSYTSKLLSCKVTSEVLEATRVNRRKSALALRWEAGIYANQEEEDNE.

A coiled-coil region spans residues 70–107 (SEEDEFKVKQLEDNIQRLEQEIQALESEESQISAKEQI). Disordered regions lie at residues 165–194 (SEDA…SPDH), 210–231 (PGVT…PSHN), and 289–362 (PAHS…SRDG). Over residues 173–183 (SKQDNCGDSRL) the composition is skewed to basic and acidic residues. A phosphoserine mark is found at Arg315 and Ser318. Positions 317–328 (PSDRMAEGERAN) are enriched in basic and acidic residues. Residues 329–347 (GHSTDQPQDLLGNSLQAPA) are compositionally biased toward polar residues. A Phosphoserine modification is found at Ser348. A compositionally biased stretch (low complexity) spans 348-357 (SPSSSTSSHC). Residue Lys370 forms a Glycyl lysine isopeptide (Lys-Gly) (interchain with G-Cter in SUMO1); alternate linkage. Lys370 is covalently cross-linked (Glycyl lysine isopeptide (Lys-Gly) (interchain with G-Cter in SUMO2); alternate). A disordered region spans residues 429–517 (KNPGIAAKWW…LSTSQPCTAP (89 aa)). Positions 455-470 (LESHRKYKERKEKRAQ) are enriched in basic and acidic residues. The span at 471 to 508 (QEQLQLQQQQQQQLQQQQLQQQQLQQQQLQQQLQQQQL) shows a compositional bias: low complexity. Ser553 carries the phosphoserine modification. The disordered stretch occupies residues 592-644 (TVGGTLEDGGTQAAKEQKAPCVSESQSAGAGPANAATQGKEGPYSEPSKRGPL). A phosphoserine mark is found at Ser678, Ser682, and Ser734. The segment covering 712–749 (FSMDNISDSGASNETPSALQENSLADFSLPQTPQTDNP) has biased composition (polar residues). 3 disordered regions span residues 712-783 (FSMD…DPLE), 800-899 (EQVD…YFSK), and 915-934 (TQES…KQRT). Residue Thr743 is modified to Phosphothreonine. A PKA-RII subunit binding domain region spans residues 782 to 795 (LEYQAGLLVQNAIQ). Over residues 801–814 (QVDKAEAHTSKEGS) the composition is skewed to basic and acidic residues. Ser847 is modified (phosphoserine). Residues 850 to 871 (QEKRDILPKNLPAEDRALREKG) show a composition bias toward basic and acidic residues. The stretch at 928–958 (RSRKQRTLSMIEEEIRAAQEREEELKRQRQV) forms a coiled coil. A phosphoserine mark is found at Ser936, Ser964, Ser995, and Ser1002. Positions 946-1021 (QEREEELKRQ…AAGTQRPKNL (76 aa)) are disordered.

In terms of tissue distribution, highly expressed in lung and weakly in thymus and cerebellum. Little or no expression in liver, heart and cerebral cortex. All isoforms are expressed in lung, but KL2A and KL2B isoforms are the principal isoforms in cerebellum.

It is found in the apical cell membrane. Its function is as follows. Binds to regulatory subunit (RII) of protein kinase A. May be involved in establishing polarity in signaling systems or in integrating PKA-RII isoforms with downstream effectors to capture, amplify and focus diffuse, trans-cellular signals carried by cAMP. Binds tp and modulates the structure of the actin cytoskeleton. This Mus musculus (Mouse) protein is PALM2-AKAP2 fusion protein.